Reading from the N-terminus, the 392-residue chain is Lipid-A-disaccharide synthase (392 aa).

It belongs to the LpxB family.

It catalyses the reaction a lipid X + a UDP-2-N,3-O-bis[(3R)-3-hydroxyacyl]-alpha-D-glucosamine = a lipid A disaccharide + UDP + H(+). The protein operates within bacterial outer membrane biogenesis; LPS lipid A biosynthesis. In terms of biological role, condensation of UDP-2,3-diacylglucosamine and 2,3-diacylglucosamine-1-phosphate to form lipid A disaccharide, a precursor of lipid A, a phosphorylated glycolipid that anchors the lipopolysaccharide to the outer membrane of the cell. This is Lipid-A-disaccharide synthase from Syntrophotalea carbinolica (strain DSM 2380 / NBRC 103641 / GraBd1) (Pelobacter carbinolicus).